A 245-amino-acid chain; its full sequence is MDTNSIPKYSIRGHNIWGFKDMAHFLDYLYQGAQIKSGSLIAINAEKILTAETDKGLNQLLDEADYLYADGISVVRGIRRKYPDAQVSRIAGADLWEALMERAGKEGTPVFLVGGKPQVLAQTESKLKAQWNVNIVGSQDGYFTPQDRDALFERIKASGAKIVTIAMGSPKQELFIRACRQVHPDALYMGVGGTYDVFTGHVKRAPKAWQNLGLEWLYRLLSQPSRIKRQFKLLKFVGYYYSNKL.

It belongs to the glycosyltransferase 26 family.

It catalyses the reaction UDP-N-acetyl-alpha-D-mannosaminouronate + N-acetyl-alpha-D-glucosaminyl-di-trans,octa-cis-undecaprenyl diphosphate = beta-D-ManNAcA-(1-&gt;4)-alpha-D-GlcNAc-di-trans,octa-cis-undecaprenyl diphosphate + UDP + H(+). The protein operates within bacterial outer membrane biogenesis; enterobacterial common antigen biosynthesis. Functionally, catalyzes the synthesis of Und-PP-GlcNAc-ManNAcA (Lipid II), the second lipid-linked intermediate involved in enterobacterial common antigen (ECA) synthesis. This Proteus mirabilis (strain HI4320) protein is UDP-N-acetyl-D-mannosaminuronic acid transferase.